A 360-amino-acid chain; its full sequence is Chorismate synthase (360 aa).

NADP(+) contacts are provided by Arg-48 and Arg-54. Residues 125–127, 246–247, Gly-286, 301–305, and Arg-327 each bind FMN; these read RSS, NA, and KPTSS.

Belongs to the chorismate synthase family. As to quaternary structure, homotetramer. It depends on FMNH2 as a cofactor.

The catalysed reaction is 5-O-(1-carboxyvinyl)-3-phosphoshikimate = chorismate + phosphate. Its pathway is metabolic intermediate biosynthesis; chorismate biosynthesis; chorismate from D-erythrose 4-phosphate and phosphoenolpyruvate: step 7/7. Its function is as follows. Catalyzes the anti-1,4-elimination of the C-3 phosphate and the C-6 proR hydrogen from 5-enolpyruvylshikimate-3-phosphate (EPSP) to yield chorismate, which is the branch point compound that serves as the starting substrate for the three terminal pathways of aromatic amino acid biosynthesis. This reaction introduces a second double bond into the aromatic ring system. The sequence is that of Chorismate synthase from Actinobacillus pleuropneumoniae serotype 5b (strain L20).